The following is a 478-amino-acid chain: Geranial dehydrogenase (478 aa).

230 to 235 lines the NAD(+) pocket; it reads GSTSAG. E252 (proton acceptor) is an active-site residue. Residue C286 is the Nucleophile of the active site.

Belongs to the aldehyde dehydrogenase family.

It catalyses the reaction (2E)-geranial + NAD(+) + H2O = geranate + NADH + 2 H(+). The catalysed reaction is perillyl aldehyde + NAD(+) + H2O = perillate + NADH + 2 H(+). It functions in the pathway terpene metabolism; monoterpene degradation. In terms of biological role, involved in the degradation of the monoterpenes beta-myrcene and limonene. During anaerobic degradation of beta-myrcene, catalyzes the NAD(+)-dependent oxidation of geranial to geranic acid. Seems to be specific for the trans-isomer geranial, since it does not act on the cis-isomer neral. During degradation of limonene, catalyzes the NAD(+)-dependent conversion of perillyl aldehyde to perrilic acid. This chain is Geranial dehydrogenase, found in Castellaniella defragrans (strain DSM 12143 / CCUG 39792 / 65Phen) (Alcaligenes defragrans).